Consider the following 93-residue polypeptide: Cell division protein CrgA (93 aa).

2 helical membrane-spanning segments follow: residues 31–51 (VWFVALFIGLMLIGLVWLMVF) and 70–90 (LGPWNYAIAFAFMITGLLLTM).

The protein belongs to the CrgA family.

The protein resides in the cell membrane. Functionally, involved in cell division. This Mycobacterium avium (strain 104) protein is Cell division protein CrgA.